Here is a 415-residue protein sequence, read N- to C-terminus: Adenylosuccinate synthetase (415 aa).

GTP contacts are provided by residues Gly-11 to Lys-17 and Gly-39 to Thr-41. Asp-12 acts as the Proton acceptor in catalysis. Residues Asp-12 and Gly-39 each contribute to the Mg(2+) site. Residues Asp-12 to Lys-15, Asn-37 to His-40, Thr-124, Arg-138, Gln-218, Thr-233, and Arg-297 each bind IMP. His-40 (proton donor) is an active-site residue. Position 293–299 (Thr-293–Arg-299) interacts with substrate. Residues Arg-299, Lys-325–Asp-327, and Ser-403–Ser-405 each bind GTP.

This sequence belongs to the adenylosuccinate synthetase family. As to quaternary structure, homodimer. The cofactor is Mg(2+).

Its subcellular location is the cytoplasm. The enzyme catalyses IMP + L-aspartate + GTP = N(6)-(1,2-dicarboxyethyl)-AMP + GDP + phosphate + 2 H(+). The protein operates within purine metabolism; AMP biosynthesis via de novo pathway; AMP from IMP: step 1/2. Functionally, plays an important role in the de novo pathway of purine nucleotide biosynthesis. Catalyzes the first committed step in the biosynthesis of AMP from IMP. The protein is Adenylosuccinate synthetase of Helicobacter hepaticus (strain ATCC 51449 / 3B1).